We begin with the raw amino-acid sequence, 583 residues long: ATP-dependent lipid A-core flippase (583 aa).

6 helical membrane passes run 32 to 52, 71 to 91, 115 to 135, 160 to 180, 259 to 279, and 286 to 306; these read VAFL…TGFL, LHLL…AGFI, LMSL…TSKL, ILGM…IFAV, SMVV…YAVG, and FAAF…LTSL. The region spanning 34–312 is the ABC transmembrane type-1 domain; sequence FLISIIALVT…LTSLNEELQV (279 aa). The 237-residue stretch at 344 to 580 folds into the ABC transporter domain; that stretch reads IVFENVTLQY…DGHYAKLYRK (237 aa). Residue 378–385 coordinates ATP; the sequence is GRSGGGKT.

This sequence belongs to the ABC transporter superfamily. Lipid exporter (TC 3.A.1.106) family. In terms of assembly, homodimer.

The protein resides in the cell inner membrane. The catalysed reaction is ATP + H2O + lipid A-core oligosaccharideSide 1 = ADP + phosphate + lipid A-core oligosaccharideSide 2.. Functionally, involved in lipopolysaccharide (LPS) biosynthesis. Translocates lipid A-core from the inner to the outer leaflet of the inner membrane. Transmembrane domains (TMD) form a pore in the inner membrane and the ATP-binding domain (NBD) is responsible for energy generation. This Methylobacillus flagellatus (strain ATCC 51484 / DSM 6875 / VKM B-1610 / KT) protein is ATP-dependent lipid A-core flippase.